Consider the following 206-residue polypeptide: Ion-translocating oxidoreductase complex subunit G (206 aa).

A helical transmembrane segment spans residues 9–29 (GITLALFAAGSTGLTAAINQM). FMN phosphoryl threonine is present on Thr-174.

The protein belongs to the RnfG family. In terms of assembly, the complex is composed of six subunits: RsxA, RsxB, RsxC, RsxD, RsxE and RsxG. Requires FMN as cofactor.

Its subcellular location is the cell inner membrane. Functionally, part of a membrane-bound complex that couples electron transfer with translocation of ions across the membrane. Required to maintain the reduced state of SoxR. The sequence is that of Ion-translocating oxidoreductase complex subunit G from Escherichia coli O157:H7.